Reading from the N-terminus, the 137-residue chain is Small ribosomal subunit protein uS11 (137 aa).

Residues 116 to 137 form a disordered region; it reads EDVTPIPHDGTRPKGGRRGRRV.

It belongs to the universal ribosomal protein uS11 family. In terms of assembly, part of the 30S ribosomal subunit.

Functionally, located on the platform of the 30S subunit. In Pyrococcus abyssi (strain GE5 / Orsay), this protein is Small ribosomal subunit protein uS11.